Consider the following 501-residue polypeptide: Aspartyl/glutamyl-tRNA(Asn/Gln) amidotransferase subunit B (501 aa).

Belongs to the GatB/GatE family. GatB subfamily. As to quaternary structure, heterotrimer of A, B and C subunits.

It carries out the reaction L-glutamyl-tRNA(Gln) + L-glutamine + ATP + H2O = L-glutaminyl-tRNA(Gln) + L-glutamate + ADP + phosphate + H(+). It catalyses the reaction L-aspartyl-tRNA(Asn) + L-glutamine + ATP + H2O = L-asparaginyl-tRNA(Asn) + L-glutamate + ADP + phosphate + 2 H(+). Allows the formation of correctly charged Asn-tRNA(Asn) or Gln-tRNA(Gln) through the transamidation of misacylated Asp-tRNA(Asn) or Glu-tRNA(Gln) in organisms which lack either or both of asparaginyl-tRNA or glutaminyl-tRNA synthetases. The reaction takes place in the presence of glutamine and ATP through an activated phospho-Asp-tRNA(Asn) or phospho-Glu-tRNA(Gln). This is Aspartyl/glutamyl-tRNA(Asn/Gln) amidotransferase subunit B from Mycobacterium sp. (strain KMS).